Reading from the N-terminus, the 476-residue chain is Glycogen synthase (476 aa).

K15 serves as a coordination point for ADP-alpha-D-glucose.

Belongs to the glycosyltransferase 1 family. Bacterial/plant glycogen synthase subfamily.

The enzyme catalyses [(1-&gt;4)-alpha-D-glucosyl](n) + ADP-alpha-D-glucose = [(1-&gt;4)-alpha-D-glucosyl](n+1) + ADP + H(+). The protein operates within glycan biosynthesis; glycogen biosynthesis. Its function is as follows. Synthesizes alpha-1,4-glucan chains using ADP-glucose. The chain is Glycogen synthase from Yersinia pseudotuberculosis serotype IB (strain PB1/+).